The primary structure comprises 528 residues: MIELRNFSYTYGTAAIPALKNINLEIRKGELLLVTGHSAAGKTTLALAMAGILHHEIGGKIEGNISFQSRDVKEFDGIKELSRHIGVVFDDAESQLIFTTVEEEIFSGLENRGHPEKEMVRRSKEAMDFCAISHLNNRAPHMLSGGQKQKVALAATLALDTEVLILDEATAELDSQAVRKVFSVLKRLKDAGKTIIIIDHNIEDFLEIGDRVVLLEKGEIKAIKSPSEFTSKSSDLTSTNLTSTSALQTDLPLSRTAEQPIISVKNLTQRYGEILALDNIDLEIYPGELVAILGENGSGKTTLVKHFNGLLRPYSGKVTVKGLETSTTPINELVKHTGLVFQNPDNMLFEDTVEAEINFGLNNIGVKGPEAVGAILRSLELVNLNDKQKVFPRHLSRGERQRLAVACIIAMKPELIVLDEPTTGLDAEESDRMMQLMRKLQQEGHTIVMVTHNLQIVRDHVERVIRMESGKVVEDSANRKFSGKGSVKEESDYKGHVSKEIVSEEIVSEEIVSEESVSEECVRGGTCA.

ABC transporter domains lie at 2-242 (IELR…TNLT) and 262-494 (ISVK…SDYK). Residues 36–43 (GHSAAGKT) and 294–301 (GENGSGKT) each bind ATP.

This sequence belongs to the ABC transporter superfamily.

It localises to the cell membrane. Functionally, probably part of an ABC transporter complex. Responsible for energy coupling to the transport system. This Methanosarcina acetivorans (strain ATCC 35395 / DSM 2834 / JCM 12185 / C2A) protein is Putative ABC transporter ATP-binding protein MA_1418.